A 534-amino-acid chain; its full sequence is Coiled-coil domain-containing protein 183 (534 aa).

Coiled-coil stretches lie at residues 10–54 (EAQI…NLRR), 136–209 (DATK…DMTV), and 321–406 (RFLA…LLVI).

In Mus musculus (Mouse), this protein is Coiled-coil domain-containing protein 183 (Ccdc183).